Reading from the N-terminus, the 94-residue chain is Large ribosomal subunit protein bL25 (94 aa).

The protein belongs to the bacterial ribosomal protein bL25 family. Part of the 50S ribosomal subunit; part of the 5S rRNA/L5/L18/L25 subcomplex. Contacts the 5S rRNA. Binds to the 5S rRNA independently of L5 and L18.

In terms of biological role, this is one of the proteins that binds to the 5S RNA in the ribosome where it forms part of the central protuberance. The protein is Large ribosomal subunit protein bL25 of Salmonella agona (strain SL483).